The sequence spans 122 residues: NADH-quinone oxidoreductase subunit A (122 aa).

Helical transmembrane passes span 10–30, 66–86, and 91–111; these read MIVL…LTLG, IFAL…PWAV, and LGLF…VGLA.

Belongs to the complex I subunit 3 family. As to quaternary structure, NDH-1 is composed of 14 different subunits. Subunits NuoA, H, J, K, L, M, N constitute the membrane sector of the complex.

It localises to the cell membrane. The enzyme catalyses a quinone + NADH + 5 H(+)(in) = a quinol + NAD(+) + 4 H(+)(out). NDH-1 shuttles electrons from NADH, via FMN and iron-sulfur (Fe-S) centers, to quinones in the respiratory chain. The immediate electron acceptor for the enzyme in this species is believed to be a menaquinone. Couples the redox reaction to proton translocation (for every two electrons transferred, four hydrogen ions are translocated across the cytoplasmic membrane), and thus conserves the redox energy in a proton gradient. The polypeptide is NADH-quinone oxidoreductase subunit A (Bacillus cereus (strain ATCC 14579 / DSM 31 / CCUG 7414 / JCM 2152 / NBRC 15305 / NCIMB 9373 / NCTC 2599 / NRRL B-3711)).